The chain runs to 380 residues: tRNA(Met) cytidine acetate ligase (380 aa).

ATP-binding positions include 7–20 (ITEY…HLYH), G100, N153, and R178.

It belongs to the TmcAL family.

Its subcellular location is the cytoplasm. The catalysed reaction is cytidine(34) in elongator tRNA(Met) + acetate + ATP = N(4)-acetylcytidine(34) in elongator tRNA(Met) + AMP + diphosphate. In terms of biological role, catalyzes the formation of N(4)-acetylcytidine (ac(4)C) at the wobble position of elongator tRNA(Met), using acetate and ATP as substrates. First activates an acetate ion to form acetyladenylate (Ac-AMP) and then transfers the acetyl group to tRNA to form ac(4)C34. This is tRNA(Met) cytidine acetate ligase from Staphylococcus haemolyticus (strain JCSC1435).